Reading from the N-terminus, the 317-residue chain is Acetyl-coenzyme A carboxylase carboxyl transferase subunit alpha (317 aa).

Residues 40 to 293 (LEVRVREAIV…GDVIANALGE (254 aa)) enclose the CoA carboxyltransferase C-terminal domain.

This sequence belongs to the AccA family. As to quaternary structure, acetyl-CoA carboxylase is a heterohexamer composed of biotin carboxyl carrier protein (AccB), biotin carboxylase (AccC) and two subunits each of ACCase subunit alpha (AccA) and ACCase subunit beta (AccD).

Its subcellular location is the cytoplasm. It catalyses the reaction N(6)-carboxybiotinyl-L-lysyl-[protein] + acetyl-CoA = N(6)-biotinyl-L-lysyl-[protein] + malonyl-CoA. The protein operates within lipid metabolism; malonyl-CoA biosynthesis; malonyl-CoA from acetyl-CoA: step 1/1. Functionally, component of the acetyl coenzyme A carboxylase (ACC) complex. First, biotin carboxylase catalyzes the carboxylation of biotin on its carrier protein (BCCP) and then the CO(2) group is transferred by the carboxyltransferase to acetyl-CoA to form malonyl-CoA. This chain is Acetyl-coenzyme A carboxylase carboxyl transferase subunit alpha, found in Rhizobium leguminosarum bv. trifolii (strain WSM2304).